The sequence spans 251 residues: Copper transport protein CTR1 (251 aa).

A helical membrane pass occupies residues 90-110 (AFGIFVLLFFVAFLARMLEFV). Positions 157–173 (DESIDKQNSPQHEETTK) are enriched in basic and acidic residues. The segment at 157–176 (DESIDKQNSPQHEETTKARG) is disordered. The helical transmembrane segment at 208–228 (MLAAMTYTLTYFFAVVIGSGV) threads the bilayer.

In terms of assembly, oligomer.

It localises to the cell membrane. Required for high affinity copper (probably reduced Cu I) transport into the cell. In Candida albicans (strain SC5314 / ATCC MYA-2876) (Yeast), this protein is Copper transport protein CTR1 (CTR1).